Consider the following 331-residue polypeptide: Phenylalanine--tRNA ligase alpha subunit (331 aa).

Glu-252 is a binding site for Mg(2+).

It belongs to the class-II aminoacyl-tRNA synthetase family. Phe-tRNA synthetase alpha subunit type 1 subfamily. In terms of assembly, tetramer of two alpha and two beta subunits. Requires Mg(2+) as cofactor.

It is found in the cytoplasm. The catalysed reaction is tRNA(Phe) + L-phenylalanine + ATP = L-phenylalanyl-tRNA(Phe) + AMP + diphosphate + H(+). This Marinomonas sp. (strain MWYL1) protein is Phenylalanine--tRNA ligase alpha subunit.